A 771-amino-acid chain; its full sequence is Probable exo-1,4-beta-xylosidase bxlB (771 aa).

A signal peptide spans 1–25; that stretch reads MVGLTPQHYGNAIALMTYLASTALA. N-linked (GlcNAc...) asparagine glycosylation occurs at Asn-67. Asp-293 is a catalytic residue. N-linked (GlcNAc...) asparagine glycans are attached at residues Asn-305, Asn-345, Asn-423, Asn-462, and Asn-463.

The protein belongs to the glycosyl hydrolase 3 family.

The protein localises to the secreted. It catalyses the reaction Hydrolysis of (1-&gt;4)-beta-D-xylans, to remove successive D-xylose residues from the non-reducing termini.. It functions in the pathway glycan degradation; xylan degradation. In terms of biological role, xylan 1,4-beta-xylosidase involved in the hydrolysis of xylan, a major structural heterogeneous polysaccharide found in plant biomass representing the second most abundant polysaccharide in the biosphere, after cellulose. This is Probable exo-1,4-beta-xylosidase bxlB (bxlB) from Aspergillus clavatus (strain ATCC 1007 / CBS 513.65 / DSM 816 / NCTC 3887 / NRRL 1 / QM 1276 / 107).